A 244-amino-acid chain; its full sequence is 14-3-3 protein beta/alpha-B (244 aa).

Residue Met-1 is modified to N-acetylmethionine.

It belongs to the 14-3-3 family. In terms of assembly, homodimer, and heterodimer with other family members.

Its subcellular location is the cytoplasm. Adapter protein implicated in the regulation of a large spectrum of both general and specialized signaling pathways. Binds to a large number of partners, usually by recognition of a phosphoserine or phosphothreonine motif. Binding generally results in the modulation of the activity of the binding partner. The polypeptide is 14-3-3 protein beta/alpha-B (ywhab-b) (Xenopus laevis (African clawed frog)).